The chain runs to 212 residues: Uracil-DNA glycosylase (212 aa).

Catalysis depends on D59, which acts as the Proton acceptor.

Belongs to the uracil-DNA glycosylase (UDG) superfamily. UNG family.

The protein resides in the cytoplasm. It catalyses the reaction Hydrolyzes single-stranded DNA or mismatched double-stranded DNA and polynucleotides, releasing free uracil.. Its function is as follows. Excises uracil residues from the DNA which can arise as a result of misincorporation of dUMP residues by DNA polymerase or due to deamination of cytosine. In Ureaplasma urealyticum serovar 10 (strain ATCC 33699 / Western), this protein is Uracil-DNA glycosylase.